The chain runs to 139 residues: MPTINQLVKVNRKAKTWKTKAPALNRGINTLIKKVTKIASPQKRGVCTRVATMTPKKPNSALRKYARVRLTNGMEVNAYIPGEGHNLQEHSVVLIRGGRVKDLPGVRYHVIRGTLDTQGVAKRSQGRSLYGVKRPKVKK.

3-methylthioaspartic acid is present on Asp102.

This sequence belongs to the universal ribosomal protein uS12 family. In terms of assembly, part of the 30S ribosomal subunit. Contacts proteins S8 and S17. May interact with IF1 in the 30S initiation complex.

In terms of biological role, with S4 and S5 plays an important role in translational accuracy. Functionally, interacts with and stabilizes bases of the 16S rRNA that are involved in tRNA selection in the A site and with the mRNA backbone. Located at the interface of the 30S and 50S subunits, it traverses the body of the 30S subunit contacting proteins on the other side and probably holding the rRNA structure together. The combined cluster of proteins S8, S12 and S17 appears to hold together the shoulder and platform of the 30S subunit. In Mycoplasma capricolum subsp. capricolum (strain California kid / ATCC 27343 / NCTC 10154), this protein is Small ribosomal subunit protein uS12.